We begin with the raw amino-acid sequence, 222 residues long: Superoxide dismutase [Mn], mitochondrial (222 aa).

Residues 1–24 (MLSRAVCGTGRQLAPALGYLGSRQ) constitute a mitochondrion transit peptide. Residue His50 coordinates Mn(2+). Tyr58 is modified (3'-nitrotyrosine). N6-acetyllysine; alternate occurs at positions 68 and 75. Residues Lys68 and Lys75 each carry the N6-succinyllysine; alternate modification. His98 lines the Mn(2+) pocket. An N6-acetyllysine modification is found at Lys114. N6-acetyllysine; alternate occurs at positions 122 and 130. Lys122 and Lys130 each carry N6-succinyllysine; alternate. Mn(2+)-binding residues include Asp183 and His187. At Lys202 the chain carries N6-acetyllysine.

The protein belongs to the iron/manganese superoxide dismutase family. In terms of assembly, homotetramer. Mn(2+) serves as cofactor. In terms of processing, nitrated under oxidative stress. Nitration coupled with oxidation inhibits the catalytic activity. Acetylation at Lys-122 decreases enzymatic activity. Deacetylated by SIRT3 upon exposure to ionizing radiations or after long fasting. Post-translationally, polyubiquitinated; leading to proteasomal degradation. Deubiquitinated by USP36 which increases protein stability.

It is found in the mitochondrion matrix. The catalysed reaction is 2 superoxide + 2 H(+) = H2O2 + O2. Functionally, destroys superoxide anion radicals which are normally produced within the cells and which are toxic to biological systems. This Macaca nemestrina (Pig-tailed macaque) protein is Superoxide dismutase [Mn], mitochondrial (SOD2).